Reading from the N-terminus, the 251-residue chain is Imidazole glycerol phosphate synthase subunit HisF (251 aa).

Active-site residues include aspartate 10 and aspartate 129.

Belongs to the HisA/HisF family. As to quaternary structure, heterodimer of HisH and HisF.

Its subcellular location is the cytoplasm. It carries out the reaction 5-[(5-phospho-1-deoxy-D-ribulos-1-ylimino)methylamino]-1-(5-phospho-beta-D-ribosyl)imidazole-4-carboxamide + L-glutamine = D-erythro-1-(imidazol-4-yl)glycerol 3-phosphate + 5-amino-1-(5-phospho-beta-D-ribosyl)imidazole-4-carboxamide + L-glutamate + H(+). It functions in the pathway amino-acid biosynthesis; L-histidine biosynthesis; L-histidine from 5-phospho-alpha-D-ribose 1-diphosphate: step 5/9. Its function is as follows. IGPS catalyzes the conversion of PRFAR and glutamine to IGP, AICAR and glutamate. The HisF subunit catalyzes the cyclization activity that produces IGP and AICAR from PRFAR using the ammonia provided by the HisH subunit. The polypeptide is Imidazole glycerol phosphate synthase subunit HisF (Cutibacterium acnes (strain DSM 16379 / KPA171202) (Propionibacterium acnes)).